The following is a 689-amino-acid chain: Protein CFAP20DC (689 aa).

Disordered regions lie at residues glycine 143 to lysine 179, leucine 217 to arginine 236, leucine 241 to asparagine 262, serine 333 to leucine 424, and serine 583 to glutamate 660. Polar residues predominate over residues arginine 150–threonine 176. Residues glutamate 343–proline 359 are compositionally biased toward polar residues. Acidic residues predominate over residues serine 394–glutamate 405. Positions isoleucine 411 to proline 421 are enriched in polar residues. A compositionally biased stretch (low complexity) spans serine 583–threonine 593.

In Macaca fascicularis (Crab-eating macaque), this protein is Protein CFAP20DC (CFAP20DC).